Here is a 292-residue protein sequence, read N- to C-terminus: Acetyl-coenzyme A carboxylase carboxyl transferase subunit beta (292 aa).

The CoA carboxyltransferase N-terminal domain maps to 23 to 292; the sequence is VWSKCTACGN…TEATEVSVNE (270 aa). Residues Cys27, Cys30, Cys46, and Cys49 each coordinate Zn(2+). Residues 27–49 form a C4-type zinc finger; it reads CTACGNIIYKADLERSLNVCPKC.

This sequence belongs to the AccD/PCCB family. As to quaternary structure, acetyl-CoA carboxylase is a heterohexamer composed of biotin carboxyl carrier protein (AccB), biotin carboxylase (AccC) and two subunits each of ACCase subunit alpha (AccA) and ACCase subunit beta (AccD). Zn(2+) serves as cofactor.

The protein resides in the cytoplasm. It catalyses the reaction N(6)-carboxybiotinyl-L-lysyl-[protein] + acetyl-CoA = N(6)-biotinyl-L-lysyl-[protein] + malonyl-CoA. Its pathway is lipid metabolism; malonyl-CoA biosynthesis; malonyl-CoA from acetyl-CoA: step 1/1. Functionally, component of the acetyl coenzyme A carboxylase (ACC) complex. Biotin carboxylase (BC) catalyzes the carboxylation of biotin on its carrier protein (BCCP) and then the CO(2) group is transferred by the transcarboxylase to acetyl-CoA to form malonyl-CoA. The polypeptide is Acetyl-coenzyme A carboxylase carboxyl transferase subunit beta (Idiomarina loihiensis (strain ATCC BAA-735 / DSM 15497 / L2-TR)).